The sequence spans 495 residues: Probable leucine aminopeptidase 2 (495 aa).

Positions 1–21 are cleaved as a signal peptide; the sequence is MKSQLLSLAVAVTTISQGVVG. Positions 130 to 216 constitute a PA domain; it reads MAELVVAKNN…SQEDGKNLAT (87 aa). N-linked (GlcNAc...) asparagine glycosylation is found at Asn-142 and Asn-235. Zn(2+) is bound by residues His-259 and Asp-271. N-linked (GlcNAc...) asparagine glycosylation occurs at Asn-272. The active-site Proton acceptor is the Glu-303. Zn(2+) contacts are provided by Glu-304 and Asp-332. Residue Asn-352 is glycosylated (N-linked (GlcNAc...) asparagine). His-430 serves as a coordination point for Zn(2+).

It belongs to the peptidase M28 family. M28A subfamily. Monomer. Zn(2+) serves as cofactor.

The protein localises to the secreted. Its function is as follows. Extracellular aminopeptidase that releases a wide variety of amino acids from natural peptides and contributes to pathogenicity. This is Probable leucine aminopeptidase 2 (LAP2) from Arthroderma benhamiae (strain ATCC MYA-4681 / CBS 112371) (Trichophyton mentagrophytes).